Consider the following 75-residue polypeptide: DNA-directed RNA polymerase subunit omega (75 aa).

The protein belongs to the RNA polymerase subunit omega family. In terms of assembly, in cyanobacteria the RNAP catalytic core is composed of 2 alpha, 1 beta, 1 beta', 1 gamma and 1 omega subunit. When a sigma factor is associated with the core the holoenzyme is formed, which can initiate transcription.

The enzyme catalyses RNA(n) + a ribonucleoside 5'-triphosphate = RNA(n+1) + diphosphate. Promotes RNA polymerase assembly. Latches the N- and C-terminal regions of the beta' subunit thereby facilitating its interaction with the beta and alpha subunits. This chain is DNA-directed RNA polymerase subunit omega, found in Microcystis aeruginosa (strain NIES-843 / IAM M-2473).